The following is a 934-amino-acid chain: MPKCDVKTRYIPATFAWIVLLLTTFLFFFYPCQFYVKSHPWVLAYQGVITFFVLANFTLATFMDPGIIPKASPDEDCEEELRAPLYKNAEINGITVKMKWCVTCKFYRPPRCSHCSVCNHCIETFDHHCPWVNNCIGRRNYRFFFFFLVSLSIHMLSIFSLCLVYVLKIMPNIKDTAPIVAIILMGLVTILAIPIFGLTGFHMVLVSRGRTTNEQVTGKFKGGYNPFSRGCWHNCCYTQFGPQYPSLLNPKKYASRRSQVQNQAISTICNDRSGQQTGAGSGAGGNGTAAVSGGGGGVGSGGGMRGTAVQYSPRSFYDASREKRGIQVKTYMAEGNGYNQRSGSTTLYSKLSPGRECSDTDLEPPPASQSQDCEPTPPLQRHNSSSFYLPQVSDSGGLNGSVSTGGGGGGDSPRHMRLYHPRHSPHARPRGLDPQRGYTSDALSPDHPVGYGVGVNGSQQQQQQALAAAAAAAAVAAQNQRSATTTATPTMQQRIKPLGVATPLVMASPVRRSNPGTPTQPRRPDFIGLNAQAVAQQQQQQQQAAAAAAAAYYEYTSGLPPQHPQAPSIQQQQQQLLLQQQRVLMQHQQQQQALQQQQQQQQQAAVHAAHPQHAALAQAAYGGSPQRRFLSEGELVRQGAGGGVAGGELSYARSNNTVDNIRELAGSPQRGVYMWKDTSPGFTNNAGQQQQQQQQAQQVVSSGIGSSAGTLSSSGAAAGVMPHAQYMTAGGGAHPLIMTHSRLQDYTIQQQQQQQQQQAAAAAAASYHRSNPTSPTTMPQVSGAGQSYILRYGGGGAVGAAGSSGSLASVTASNPATGGGGYQPALRGGVAVFPPNPMGNQGGGNLQTQPSPQIKRKQTPTRPMSFVRALEMADSMEMQSLEQQQNGGIPGSGSVGNNQQAGGGGGGHLMQSNASNSGTPDRASIYDMNYEISV.

Residues 1–9 lie on the Cytoplasmic side of the membrane; the sequence is MPKCDVKTR. A helical transmembrane segment spans residues 10-30; that stretch reads YIPATFAWIVLLLTTFLFFFY. Residues 31–47 lie on the Extracellular side of the membrane; it reads PCQFYVKSHPWVLAYQG. The helical transmembrane segment at 48–68 threads the bilayer; it reads VITFFVLANFTLATFMDPGII. Residues 69-142 lie on the Cytoplasmic side of the membrane; that stretch reads PKASPDEDCE…NNCIGRRNYR (74 aa). A DHHC domain is found at 99–149; the sequence is KWCVTCKFYRPPRCSHCSVCNHCIETFDHHCPWVNNCIGRRNYRFFFFFLV. Catalysis depends on cysteine 129, which acts as the S-palmitoyl cysteine intermediate. A helical membrane pass occupies residues 143–163; the sequence is FFFFFLVSLSIHMLSIFSLCL. Over 164-177 the chain is Extracellular; sequence VYVLKIMPNIKDTA. The chain crosses the membrane as a helical span at residues 178-198; that stretch reads PIVAIILMGLVTILAIPIFGL. At 199–934 the chain is on the cytoplasmic side; it reads TGFHMVLVSR…IYDMNYEISV (736 aa). Disordered stretches follow at residues 336–440, 506–525, 669–705, 751–780, 835–862, and 881–934; these read NGYN…GYTS, MASP…RRPD, QRGV…SGIG, QQQQ…TMPQ, PNPM…TPTR, and LEQQ…EISV. Composition is skewed to polar residues over residues 337-349 and 381-394; these read GYNQ…TLYS and RHNS…QVSD. The span at 397–411 shows a compositional bias: gly residues; the sequence is GLNGSVSTGGGGGGD. Residues 415 to 429 are compositionally biased toward basic residues; it reads HMRLYHPRHSPHARP. Composition is skewed to low complexity over residues 688-705 and 751-765; these read QQQQ…SGIG and QQQQ…AAAA. A compositionally biased stretch (polar residues) spans 768–780; that stretch reads HRSNPTSPTTMPQ. The span at 910–919 shows a compositional bias: polar residues; that stretch reads MQSNASNSGT.

Belongs to the DHHC palmitoyltransferase family. ERF2/ZDHHC9 subfamily.

The protein localises to the golgi apparatus membrane. The protein resides in the cell membrane. It carries out the reaction L-cysteinyl-[protein] + hexadecanoyl-CoA = S-hexadecanoyl-L-cysteinyl-[protein] + CoA. Palmitoyltransferase that catalyzes the addition of palmitate onto various protein substrates and therefore functions in several unrelated biological processes. Regulates tissue growth possibly by regulating Ras64B protein stability. May regulate CG34450 mRNA levels. In Drosophila melanogaster (Fruit fly), this protein is Palmitoyltransferase ZDHHC8.